We begin with the raw amino-acid sequence, 256 residues long: Floral homeotic protein APETALA 1 (256 aa).

The 61-residue stretch at 1-61 folds into the MADS-box domain; that stretch reads MGRGRVQLKR…GKLFEYSTDS (61 aa). Residues 88 to 178 form the K-box domain; the sequence is NTNWSMEYNR…SKQIKEREKI (91 aa). Residues 184-206 are disordered; that stretch reads EQWDQQNHGHNMPPPPPPQQHQI.

Homodimer capable of binding to CArG-box sequences.

Its subcellular location is the nucleus. In terms of biological role, transcription factor that promotes early floral meristem identity in synergy with LEAFY. Displays a redundant function with CAULIFLOWER in the up-regulation of LEAFY. Required subsequently for the transition of an inflorescence meristem into a floral meristem, and for the normal development of sepals and petals in flowers. Regulates positively B class homeotic proteins. The chain is Floral homeotic protein APETALA 1 (AP1) from Arabidopsis lyrata subsp. lyrata (Lyre-leaved rock-cress).